The following is a 61-amino-acid chain: UPF0434 protein Sama_1339 (61 aa).

Belongs to the UPF0434 family.

The protein is UPF0434 protein Sama_1339 of Shewanella amazonensis (strain ATCC BAA-1098 / SB2B).